We begin with the raw amino-acid sequence, 2118 residues long: Separin (2118 aa).

Ser1121 carries the post-translational modification Phosphoserine. Over residues 1309-1318 (KCSGRGRRRI) the composition is skewed to basic residues. The interval 1309-1352 (KCSGRGRRRIASVPPPLHNSSQKGLEEEGPPCTPKPPGRARQAG) is disordered. Ser1391 and Ser1394 each carry phosphoserine. Residues 1408–1428 (EEPKRRGTASRTRGQTRKGRS) form a disordered region. Phosphoserine is present on Ser1504. Residues 1941–2036 (PQNTFYVLNP…SAALAVHGNL (96 aa)) form the Peptidase C50 domain. Cys2025 is an active-site residue.

Interacts with PTTG1. Interacts with RAD21. Autocleaves. This function, which is not essential for its protease activity, is unknown. Post-translationally, phosphorylated by CDK1. There is 8 Ser/Thr phosphorylation sites. Among them, only Ser-1121 phosphorylation is the major site, which conducts to the enzyme inactivation.

Its subcellular location is the cytoplasm. It is found in the nucleus. The catalysed reaction is All bonds known to be hydrolyzed by this endopeptidase have arginine in P1 and an acidic residue in P4. P6 is often occupied by an acidic residue or by a hydroxy-amino-acid residue, the phosphorylation of which enhances cleavage.. With respect to regulation, regulated by at least two independent mechanisms. First, it is inactivated via its interaction with securin/PTTG1, which probably covers its active site. The association with PTTG1 is not only inhibitory, since PTTG1 is also required for activating it, the enzyme being inactive in cells in which PTTG1 is absent. PTTG1 degradation at anaphase, liberates it and triggers RAD21 cleavage. Second, phosphorylation at Ser-1121 inactivates it. The complete phosphorylation during mitosis, is removed when cells undergo anaphase. Activation of the enzyme at the metaphase-anaphase transition probably requires the removal of both securin and inhibitory phosphate. Its function is as follows. Caspase-like protease, which plays a central role in the chromosome segregation by cleaving the SCC1/RAD21 subunit of the cohesin complex at the onset of anaphase. During most of the cell cycle, it is inactivated by different mechanisms. The chain is Separin (Espl1) from Mus musculus (Mouse).